A 49-amino-acid polypeptide reads, in one-letter code: Small, acid-soluble spore protein O (49 aa).

The disordered stretch occupies residues 1 to 49 (MGKRKANHTISGMNAASAQGQGTGYNEEFANEPLTPAERQNNKKRKKNQ). A compositionally biased stretch (polar residues) spans 8-20 (HTISGMNAASAQG).

Belongs to the SspO family.

The protein localises to the spore core. The chain is Small, acid-soluble spore protein O from Bacillus cereus (strain B4264).